We begin with the raw amino-acid sequence, 1413 residues long: DNA-directed RNA polymerase subunit beta' (1413 aa).

The Zn(2+) site is built by cysteine 70, cysteine 72, cysteine 85, and cysteine 88. Mg(2+) is bound by residues aspartate 460, aspartate 462, and aspartate 464. Zn(2+)-binding residues include cysteine 819, cysteine 893, cysteine 900, and cysteine 903. Residues 1392-1413 (EEAFDFGTPSAPAEEPQHPAAE) are disordered.

Belongs to the RNA polymerase beta' chain family. The RNAP catalytic core consists of 2 alpha, 1 beta, 1 beta' and 1 omega subunit. When a sigma factor is associated with the core the holoenzyme is formed, which can initiate transcription. Mg(2+) serves as cofactor. Requires Zn(2+) as cofactor.

It catalyses the reaction RNA(n) + a ribonucleoside 5'-triphosphate = RNA(n+1) + diphosphate. DNA-dependent RNA polymerase catalyzes the transcription of DNA into RNA using the four ribonucleoside triphosphates as substrates. The chain is DNA-directed RNA polymerase subunit beta' from Burkholderia cenocepacia (strain ATCC BAA-245 / DSM 16553 / LMG 16656 / NCTC 13227 / J2315 / CF5610) (Burkholderia cepacia (strain J2315)).